A 229-amino-acid polypeptide reads, in one-letter code: C-&gt;U-editing enzyme APOBEC-1 (229 aa).

In terms of domain architecture, CMP/dCMP-type deaminase spans 10 to 134 (VDPTLRRRIE…QRNRQGLRDL (125 aa)). His61 lines the Zn(2+) pocket. Glu63 (proton donor) is an active-site residue. Residues Cys93 and Cys96 each contribute to the Zn(2+) site.

The protein belongs to the cytidine and deoxycytidylate deaminase family. In terms of assembly, homodimer. Interacts with A1CF; form an mRNA editing complex. Interacts with RBM47; form an mRNA editing complex. Found in a complex with CELF2/CUGBP2 and A1CF. Interacts with HNRPAB. Interacts with SYNCRIP. Zn(2+) is required as a cofactor. Expressed in the spleen. Expressed at lower level in the kidney, testis, lung, brain and liver.

The protein localises to the cytoplasm. It localises to the nucleus. It carries out the reaction a cytidine in mRNA + H2O + H(+) = a uridine in mRNA + NH4(+). The catalysed reaction is cytidine(6666) in apoB mRNA + H2O + H(+) = uridine(6666) in apoB mRNA + NH4(+). Cytidine deaminase catalyzing the cytidine to uridine postranscriptional editing of a variety of mRNAs. Form complexes with cofactors that confer differential editing activity and selectivity. Responsible for the postranscriptional editing of a CAA codon for Gln to a UAA codon for stop in the apolipoprotein B mRNA. Also involved in CGA (Arg) to UGA (Stop) editing in the NF1 mRNA. May also play a role in the epigenetic regulation of gene expression by participating in DNA demethylation. In Mus musculus (Mouse), this protein is C-&gt;U-editing enzyme APOBEC-1.